The chain runs to 144 residues: Large ribosomal subunit protein uL15 (144 aa).

The disordered stretch occupies residues Met1–Leu57. Residues Arg21 to Ser31 show a composition bias toward gly residues.

It belongs to the universal ribosomal protein uL15 family. As to quaternary structure, part of the 50S ribosomal subunit.

Functionally, binds to the 23S rRNA. The sequence is that of Large ribosomal subunit protein uL15 from Dichelobacter nodosus (strain VCS1703A).